Here is a 216-residue protein sequence, read N- to C-terminus: Redox-sensing transcriptional repressor Rex (216 aa).

A DNA-binding region (H-T-H motif) is located at residues 20-59 (QYYRLFKSLVEENVTRTNSQLISEKIGVDAATIRRDFSLF). NAD(+) is bound at residue 94–99 (GVGNLG).

It belongs to the transcriptional regulatory Rex family. Homodimer.

Its subcellular location is the cytoplasm. Modulates transcription in response to changes in cellular NADH/NAD(+) redox state. The protein is Redox-sensing transcriptional repressor Rex of Lactococcus lactis subsp. lactis (strain IL1403) (Streptococcus lactis).